A 431-amino-acid chain; its full sequence is Adenylosuccinate synthetase (431 aa).

Residues 15 to 21 (GDEGKGK) and 43 to 45 (GHT) contribute to the GTP site. The Proton acceptor role is filled by Asp16. Positions 16 and 43 each coordinate Mg(2+). IMP is bound by residues 16 to 19 (DEGK), 41 to 44 (NAGH), Thr135, Arg149, Asn227, Thr242, and Arg306. Residue His44 is the Proton donor of the active site. Substrate is bound at residue 302–308 (VTTGRKR). GTP-binding positions include Arg308, 334–336 (KLD), and 416–418 (GVG).

This sequence belongs to the adenylosuccinate synthetase family. As to quaternary structure, homodimer. Requires Mg(2+) as cofactor.

The protein resides in the cytoplasm. The enzyme catalyses IMP + L-aspartate + GTP = N(6)-(1,2-dicarboxyethyl)-AMP + GDP + phosphate + 2 H(+). It participates in purine metabolism; AMP biosynthesis via de novo pathway; AMP from IMP: step 1/2. Functionally, plays an important role in the de novo pathway and in the salvage pathway of purine nucleotide biosynthesis. Catalyzes the first committed step in the biosynthesis of AMP from IMP. The polypeptide is Adenylosuccinate synthetase (Monosiga brevicollis (Choanoflagellate)).